We begin with the raw amino-acid sequence, 956 residues long: Zinc finger CCHC domain-containing protein 14 (956 aa).

8 disordered regions span residues 25-50 (SSLN…PSGA), 78-99 (ALHT…GKHG), 206-229 (SSSS…KVGA), 243-276 (GIPS…GTGS), 361-464 (KEKS…EKEK), 485-505 (PVQN…PQLM), 543-583 (LEER…QGLS), and 750-786 (FYSG…PQPA). The span at 29–43 (SGGGGGGGGGGGGKS) shows a compositional bias: gly residues. Low complexity-rich tracts occupy residues 206–225 (SSSS…PSLP) and 246–265 (SSQS…SASL). Residues 369-389 (LNSSAPSLVTSSGVARVTPTS) are compositionally biased toward polar residues. A compositionally biased stretch (low complexity) spans 423 to 432 (SSEYSSSSSS). Over residues 438-464 (VREESSDSAEESDRRVDIHVEGTEKEK) the composition is skewed to basic and acidic residues. Residues 750-768 (FYSGGAGSSSPGNIPASSQ) are compositionally biased toward low complexity. A CCHC-type zinc finger spans residues 913–930 (LSCYNCGATGHRAQDCKQ).

This is Zinc finger CCHC domain-containing protein 14 (Zcchc14) from Mus musculus (Mouse).